Reading from the N-terminus, the 1450-residue chain is Protein TIC 214 (1450 aa).

6 helical membrane passes run 29-49 (FGLYYGFLTTLPISFSHIVVI), 61-81 (VMAFCGLITGQLCMIGTIYYT), 86-106 (LFIKPHLILLLSIIYSFFYWQ), 132-152 (FFDSFVFQILNPILLPTPIFF), 166-186 (LNFFLSFFIGSLIGNFLFFNA), and 213-233 (IIPIVFCICLIPIAKYSHIPF).

Belongs to the TIC214 family. As to quaternary structure, part of the Tic complex.

Its subcellular location is the plastid. It is found in the chloroplast inner membrane. Functionally, involved in protein precursor import into chloroplasts. May be part of an intermediate translocation complex acting as a protein-conducting channel at the inner envelope. The chain is Protein TIC 214 from Chaetosphaeridium globosum (Charophycean green alga).